Here is an 808-residue protein sequence, read N- to C-terminus: N-terminal kinase-like protein (808 aa).

The 301-residue stretch at 14-314 (FELIPEPPEG…PEDFCRHKVL (301 aa)) folds into the Protein kinase domain. HEAT repeat units lie at residues 350 to 388 (IIPV…VNTQ), 389 to 427 (IFPH…LNVE), and 507 to 545 (ILPV…EDPT). Disordered stretches follow at residues 540–566 (VSED…GGAA), 587–646 (SHPT…RWDD), and 658–808 (SVLA…RKLD). Positions 556–566 (AASSPGMGGAA) are enriched in low complexity. The segment covering 587-600 (SHPTTAPTETNIPQ) has biased composition (polar residues). The span at 601–617 (RPTPEGVPAPAPTPVPA) shows a compositional bias: pro residues. The span at 660–680 (LAQQDDWSTGGQVSRASQVSN) shows a compositional bias: polar residues. A compositionally biased stretch (basic and acidic residues) spans 681–690 (SDHKSSKSPE). S754 carries the phosphoserine modification. Residues 755–764 (WGEDNWEGLE) are compositionally biased toward acidic residues. The stretch at 761–797 (EGLETDSRQVKAELARKKREERRREMEAKRAERKVAK) forms a coiled coil. Composition is skewed to basic and acidic residues over residues 765–775 (TDSRQVKAELA) and 782–795 (RRRE…ERKV). The interval 793–808 (RKVAKGPMKLGARKLD) is interaction with COPB1.

Belongs to the protein kinase superfamily. In terms of assembly, interacts with GORAB. Interacts with COPA, COPB1 and COPB2. Homooligomer. Interacts with AP2B1. In terms of tissue distribution, ubiquitous.

Its subcellular location is the cytoplasm. It localises to the cytoskeleton. The protein localises to the microtubule organizing center. It is found in the centrosome. The protein resides in the endoplasmic reticulum-Golgi intermediate compartment. Its subcellular location is the golgi apparatus. It localises to the cis-Golgi network. The protein localises to the nucleus. Functionally, regulates COPI-mediated retrograde protein traffic at the interface between the Golgi apparatus and the endoplasmic reticulum. Involved in the maintenance of the Golgi apparatus morphology. In terms of biological role, acts as a transcriptional activator. It binds to three different types of GC-rich DNA binding sites (box-A, -B and -C) in the beta-polymerase promoter region. It also binds to the TERT promoter region. This Homo sapiens (Human) protein is N-terminal kinase-like protein (SCYL1).